An 80-amino-acid polypeptide reads, in one-letter code: Large ribosomal subunit protein bL31B (80 aa).

Belongs to the bacterial ribosomal protein bL31 family. Type B subfamily. In terms of assembly, part of the 50S ribosomal subunit.

This chain is Large ribosomal subunit protein bL31B, found in Xanthomonas axonopodis pv. citri (strain 306).